Here is a 337-residue protein sequence, read N- to C-terminus: Histidine N-acetyltransferase (337 aa).

Residues 1-2 constitute a propeptide, removed in mature form; it reads MK. In terms of domain architecture, N-acetyltransferase spans 21 to 157; it reads LQFSVATEED…GILLMRFRAE (137 aa).

In terms of tissue distribution, expressed exclusively in the brain and lens.

It carries out the reaction L-histidine + acetyl-CoA = N(alpha)-acetyl-L-histidine + CoA + H(+). In terms of biological role, enzyme responsible for the N-acetyl-histidine (NAH) synthesis, which is a major constituent of brain and lens of ectothermic vertebrates. The protein is Histidine N-acetyltransferase (hisat) of Oreochromis niloticus (Nile tilapia).